The primary structure comprises 130 residues: DNA-binding protein HU (130 aa).

It belongs to the bacterial histone-like protein family.

Histone-like DNA-binding protein which is capable of wrapping DNA to stabilize it, and thus to prevent its denaturation under extreme environmental conditions. This is DNA-binding protein HU (hup) from Ureaplasma parvum serovar 3 (strain ATCC 700970).